A 297-amino-acid chain; its full sequence is Transcription factor LRL3 (297 aa).

The interval 59-109 (PDQFHHPQESGGPTMGSQEGLQPQGTVSTTSAPVVRQKPRVRARRGQATDP) is disordered. Over residues 73–90 (MGSQEGLQPQGTVSTTSA) the composition is skewed to polar residues. The basic motif; degenerate stretch occupies residues 105 to 118 (QATDPHSIAERLRR). A bHLH domain is found at 105 to 154 (QATDPHSIAERLRRERIAERMKSLQELVPNTNKTDKASMLDEIIEYVRFL). Residues 119-154 (ERIAERMKSLQELVPNTNKTDKASMLDEIIEYVRFL) are helix-loop-helix motif.

In terms of assembly, homodimer. As to expression, expressed in trichomes of the root maturation zone. Detected constitutively in flowers.

The protein localises to the nucleus. In terms of biological role, transcription factor that regulates the development of root hairs. Does not seem to be involved in the regulation of sperm cell development. This Arabidopsis thaliana (Mouse-ear cress) protein is Transcription factor LRL3.